A 21-amino-acid polypeptide reads, in one-letter code: Major outer membrane protein P44 (21 aa).

Monomer.

Its subcellular location is the cell outer membrane. The polypeptide is Major outer membrane protein P44 (Mannheimia haemolytica (Pasteurella haemolytica)).